Reading from the N-terminus, the 336-residue chain is Ketol-acid reductoisomerase (NADP(+)) (336 aa).

The 181-residue stretch at 3-183 (ATMYYDRDVS…GGTRAGVLET (181 aa)) folds into the KARI N-terminal Rossmann domain. NADP(+) is bound by residues 26–29 (YGSQ), Arg49, Ser52, Ser54, and 84–87 (DETQ). His109 is an active-site residue. Gly135 is an NADP(+) binding site. The region spanning 184–329 (TFKEETETDL…RELRSKMPFI (146 aa)) is the KARI C-terminal knotted domain. 4 residues coordinate Mg(2+): Asp192, Glu196, Glu228, and Glu232. Residue Ser253 coordinates substrate.

This sequence belongs to the ketol-acid reductoisomerase family. Mg(2+) is required as a cofactor.

It catalyses the reaction (2R)-2,3-dihydroxy-3-methylbutanoate + NADP(+) = (2S)-2-acetolactate + NADPH + H(+). The enzyme catalyses (2R,3R)-2,3-dihydroxy-3-methylpentanoate + NADP(+) = (S)-2-ethyl-2-hydroxy-3-oxobutanoate + NADPH + H(+). The protein operates within amino-acid biosynthesis; L-isoleucine biosynthesis; L-isoleucine from 2-oxobutanoate: step 2/4. It functions in the pathway amino-acid biosynthesis; L-valine biosynthesis; L-valine from pyruvate: step 2/4. Its function is as follows. Involved in the biosynthesis of branched-chain amino acids (BCAA). Catalyzes an alkyl-migration followed by a ketol-acid reduction of (S)-2-acetolactate (S2AL) to yield (R)-2,3-dihydroxy-isovalerate. In the isomerase reaction, S2AL is rearranged via a Mg-dependent methyl migration to produce 3-hydroxy-3-methyl-2-ketobutyrate (HMKB). In the reductase reaction, this 2-ketoacid undergoes a metal-dependent reduction by NADPH to yield (R)-2,3-dihydroxy-isovalerate. The chain is Ketol-acid reductoisomerase (NADP(+)) from Deinococcus geothermalis (strain DSM 11300 / CIP 105573 / AG-3a).